The following is a 131-amino-acid chain: Profilin-3 (131 aa).

Residues cysteine 13 and cysteine 115 are joined by a disulfide bond. The short motif at 81 to 97 (AVIRGKKGAGGITIKKT) is the Involved in PIP2 interaction element. Residue threonine 111 is modified to Phosphothreonine.

Belongs to the profilin family. Occurs in many kinds of cells as a complex with monomeric actin in a 1:1 ratio. Post-translationally, phosphorylated by MAP kinases.

It is found in the cytoplasm. It localises to the cytoskeleton. Binds to actin and affects the structure of the cytoskeleton. At high concentrations, profilin prevents the polymerization of actin, whereas it enhances it at low concentrations. By binding to PIP2, it inhibits the formation of IP3 and DG. The polypeptide is Profilin-3 (PRO3) (Phleum pratense (Common timothy)).